Reading from the N-terminus, the 123-residue chain is MPTIQQLIRNRRQPIENRTKSPALRGCPQRRGVCTRVYTVTPKKPNSALRKVARVRLTSGFEITAYIPGIGHNLQEHSVVLVRGGRVKDLPGVRYHIVRGTLDAVGVKDRQQGRSKYGVKKPK.

The protein belongs to the universal ribosomal protein uS12 family. As to quaternary structure, part of the 30S ribosomal subunit.

It is found in the plastid. The protein resides in the chloroplast. In terms of biological role, with S4 and S5 plays an important role in translational accuracy. Located at the interface of the 30S and 50S subunits. The chain is Small ribosomal subunit protein uS12c (rps12) from Physcomitrium patens (Spreading-leaved earth moss).